Here is a 396-residue protein sequence, read N- to C-terminus: 1-deoxy-D-xylulose 5-phosphate reductoisomerase (396 aa).

Positions 17, 18, 19, 20, 47, and 130 each coordinate NADPH. Lys-131 is a 1-deoxy-D-xylulose 5-phosphate binding site. Glu-132 contributes to the NADPH binding site. Asp-156 serves as a coordination point for Mn(2+). 1-deoxy-D-xylulose 5-phosphate is bound by residues Ser-157, Glu-158, Ser-182, and His-205. Glu-158 contributes to the Mn(2+) binding site. Gly-211 contacts NADPH. 1-deoxy-D-xylulose 5-phosphate is bound by residues Ser-218, Asn-223, Lys-224, and Glu-227. Residue Glu-227 participates in Mn(2+) binding.

This sequence belongs to the DXR family. The cofactor is Mg(2+). Requires Mn(2+) as cofactor.

It carries out the reaction 2-C-methyl-D-erythritol 4-phosphate + NADP(+) = 1-deoxy-D-xylulose 5-phosphate + NADPH + H(+). The protein operates within isoprenoid biosynthesis; isopentenyl diphosphate biosynthesis via DXP pathway; isopentenyl diphosphate from 1-deoxy-D-xylulose 5-phosphate: step 1/6. Catalyzes the NADPH-dependent rearrangement and reduction of 1-deoxy-D-xylulose-5-phosphate (DXP) to 2-C-methyl-D-erythritol 4-phosphate (MEP). The chain is 1-deoxy-D-xylulose 5-phosphate reductoisomerase from Rhizobium etli (strain ATCC 51251 / DSM 11541 / JCM 21823 / NBRC 15573 / CFN 42).